A 327-amino-acid chain; its full sequence is Meiotic coiled-coil protein 6 (327 aa).

Residues 66 to 188 are a coiled coil; sequence DAFERDSTQR…TETKEMNKIK (123 aa). The span at 175–199 shows a compositional bias: basic and acidic residues; the sequence is RRMETETKEMNKIKPKNDSESDRFK. Positions 175–234 are disordered; the sequence is RRMETETKEMNKIKPKNDSESDRFKRNSQSLSQQSPLLDVHSPDNSNHRTMLNINNSSPI. Residues 202–212 show a composition bias toward low complexity; it reads SQSLSQQSPLL. Over residues 217–232 the composition is skewed to polar residues; the sequence is PDNSNHRTMLNINNSS. Residues 243–297 adopt a coiled-coil conformation; sequence NEVKNRISRLQKTFADLENQHHSFQQICQTLRKRLENDSSTTKQRLSKLEEIIRN.

As to quaternary structure, interacts with alp4, kms1 and mbo1.

It localises to the nucleus. It is found in the cytoplasm. Its subcellular location is the cytoskeleton. The protein resides in the microtubule organizing center. The protein localises to the spindle pole body. Its function is as follows. Has a role in meiotic nuclear oscillation and recombination. Required to remodel astral microtubules into the 'horsetail' astral array maintaining the 'horsetail' nuclear movement. Promotes homologous paring of chromosomes during this movement. The sequence is that of Meiotic coiled-coil protein 6 (mcp6) from Schizosaccharomyces pombe (strain 972 / ATCC 24843) (Fission yeast).